A 354-amino-acid chain; its full sequence is UPF0283 membrane protein HI_0043 (354 aa).

A run of 3 helical transmembrane segments spans residues 57–77, 87–107, and 211–231; these read LLKFTALLFGLATVAQSVQWI, IYLAFALVSLIIILLGIKEII, and ESAVIVAISPLAVVDMFFIAW.

Belongs to the UPF0283 family.

It is found in the cell inner membrane. The protein is UPF0283 membrane protein HI_0043 of Haemophilus influenzae (strain ATCC 51907 / DSM 11121 / KW20 / Rd).